We begin with the raw amino-acid sequence, 421 residues long: 3-phosphoshikimate 1-carboxyvinyltransferase (421 aa).

The 3-phosphoshikimate site is built by K20, S21, and R25. K20 is a phosphoenolpyruvate binding site. Phosphoenolpyruvate-binding residues include G90 and R117. 6 residues coordinate 3-phosphoshikimate: S162, S163, Q164, S190, D304, and K331. Q164 serves as a coordination point for phosphoenolpyruvate. The active-site Proton acceptor is D304. Residues R335 and R376 each contribute to the phosphoenolpyruvate site.

Belongs to the EPSP synthase family. As to quaternary structure, monomer.

It is found in the cytoplasm. It carries out the reaction 3-phosphoshikimate + phosphoenolpyruvate = 5-O-(1-carboxyvinyl)-3-phosphoshikimate + phosphate. It functions in the pathway metabolic intermediate biosynthesis; chorismate biosynthesis. Catalyzes the transfer of the enolpyruvyl moiety of phosphoenolpyruvate (PEP) to the 5-hydroxyl of shikimate-3-phosphate (S3P) to produce enolpyruvyl shikimate-3-phosphate and inorganic phosphate. The polypeptide is 3-phosphoshikimate 1-carboxyvinyltransferase (Methanothrix thermoacetophila (strain DSM 6194 / JCM 14653 / NBRC 101360 / PT) (Methanosaeta thermophila)).